The following is a 157-amino-acid chain: Rieske domain-containing protein (157 aa).

N-acetylmethionine is present on methionine 1. The residue at position 6 (serine 6) is a Phosphoserine. 2 Rieske domains span residues 16 to 94 (SSVC…TGEG) and 17 to 131 (SVCV…NIYV). 4 residues coordinate [2Fe-2S] cluster: cysteine 57, histidine 59, cysteine 80, and histidine 83.

[2Fe-2S] cluster is required as a cofactor.

This chain is Rieske domain-containing protein (RFESD), found in Homo sapiens (Human).